The sequence spans 299 residues: Tryptophan prenyltransferase ComQ (299 aa).

Positions 67 and 71 each coordinate Mg(2+).

Belongs to the FPP/GGPP synthase family. Mg(2+) is required as a cofactor.

The protein resides in the cell membrane. It carries out the reaction L-tryptophyl-[protein] + (2E,6E)-farnesyl diphosphate = (2S,3R)-3-farnesyl-2,3-dihydro-2,N(alpha)-cyclo-L-tryptophyl-[protein] + diphosphate. Functionally, part of a major quorum-sensing system that regulates the development of genetic competence. Involved in the maturation of the competence pheromone ComX. Acts by catalyzing the transfer of a farnesyl group on the ComX pheromone. Shows weak geranylation activity with geranyl diphosphate (GPP). The sequence is that of Tryptophan prenyltransferase ComQ from Bacillus subtilis (strain 168).